The sequence spans 134 residues: Acyl carrier protein, chloroplastic (134 aa).

The transit peptide at Met1 to Cys51 directs the protein to the chloroplast. The 76-residue stretch at Gln55–Met130 folds into the Carrier domain. Ser90 is modified (O-(pantetheine 4'-phosphoryl)serine).

The protein belongs to the acyl carrier protein (ACP) family. Post-translationally, 4'-phosphopantetheine is transferred from CoA to a specific serine of apo-ACP by acpS. This modification is essential for activity because fatty acids are bound in thioester linkage to the sulfhydryl of the prosthetic group. Seed.

The protein resides in the plastid. The protein localises to the chloroplast. Its pathway is lipid metabolism; fatty acid biosynthesis. Its function is as follows. Carrier of the growing fatty acid chain in fatty acid biosynthesis. This Brassica napus (Rape) protein is Acyl carrier protein, chloroplastic (ACL1.C1).